Consider the following 244-residue polypeptide: tRNA (guanine-N(7)-)-methyltransferase (244 aa).

The tract at residues 1-24 is disordered; it reads MTDSHVPHPESPAVEEGEERPHRR. S-adenosyl-L-methionine is bound by residues glutamate 74, glutamate 99, aspartate 126, and aspartate 149. Residue aspartate 149 is part of the active site. Substrate is bound by residues lysine 153, aspartate 185, and 222-225; that span reads TKFE.

The protein belongs to the class I-like SAM-binding methyltransferase superfamily. TrmB family.

The catalysed reaction is guanosine(46) in tRNA + S-adenosyl-L-methionine = N(7)-methylguanosine(46) in tRNA + S-adenosyl-L-homocysteine. Its pathway is tRNA modification; N(7)-methylguanine-tRNA biosynthesis. Its function is as follows. Catalyzes the formation of N(7)-methylguanine at position 46 (m7G46) in tRNA. The protein is tRNA (guanine-N(7)-)-methyltransferase of Pseudomonas savastanoi pv. phaseolicola (strain 1448A / Race 6) (Pseudomonas syringae pv. phaseolicola (strain 1448A / Race 6)).